The primary structure comprises 449 residues: Tubulin beta-5 chain (449 aa).

The GTP site is built by Gln11, Glu70, Ser139, Gly143, Thr144, Gly145, Asn205, and Asn227. Mg(2+) is bound at residue Glu70. The segment at 427–449 (QDATADEEGEYDVEEEEEGDYET) is disordered. Residues 430–449 (TADEEGEYDVEEEEEGDYET) show a composition bias toward acidic residues.

The protein belongs to the tubulin family. In terms of assembly, dimer of alpha and beta chains. A typical microtubule is a hollow water-filled tube with an outer diameter of 25 nm and an inner diameter of 15 nM. Alpha-beta heterodimers associate head-to-tail to form protofilaments running lengthwise along the microtubule wall with the beta-tubulin subunit facing the microtubule plus end conferring a structural polarity. Microtubules usually have 13 protofilaments but different protofilament numbers can be found in some organisms and specialized cells. Requires Mg(2+) as cofactor.

The protein localises to the cytoplasm. Its subcellular location is the cytoskeleton. In terms of biological role, tubulin is the major constituent of microtubules, a cylinder consisting of laterally associated linear protofilaments composed of alpha- and beta-tubulin heterodimers. Microtubules grow by the addition of GTP-tubulin dimers to the microtubule end, where a stabilizing cap forms. Below the cap, tubulin dimers are in GDP-bound state, owing to GTPase activity of alpha-tubulin. This chain is Tubulin beta-5 chain (TUBB5), found in Arabidopsis thaliana (Mouse-ear cress).